The chain runs to 363 residues: Spermidine/putrescine import ATP-binding protein PotA (363 aa).

The ABC transporter domain occupies 5–236; that stretch reads IKLKHVRKEY…PVNDFVARFI (232 aa). 38–45 is a binding site for ATP; sequence GPSGSGKT.

This sequence belongs to the ABC transporter superfamily. Spermidine/putrescine importer (TC 3.A.1.11.1) family. In terms of assembly, the complex is composed of two ATP-binding proteins (PotA), two transmembrane proteins (PotB and PotC) and a solute-binding protein (PotD).

It localises to the cell membrane. The catalysed reaction is ATP + H2O + polyamine-[polyamine-binding protein]Side 1 = ADP + phosphate + polyamineSide 2 + [polyamine-binding protein]Side 1.. In terms of biological role, part of the ABC transporter complex PotABCD involved in spermidine/putrescine import. Responsible for energy coupling to the transport system. The polypeptide is Spermidine/putrescine import ATP-binding protein PotA (Lactobacillus johnsonii (strain CNCM I-12250 / La1 / NCC 533)).